Here is a 427-residue protein sequence, read N- to C-terminus: Rhodocoxin reductase (427 aa).

FAD is bound at residue 2-34 (SIVIIGSGQAGFEAAVSLRSHGFSGTITLVGDE). Residue 144–172 (SLVVIGAGFIGLEVAAAARKKGLDVTVVE) coordinates NAD(+).

This sequence belongs to the FAD-dependent oxidoreductase family. Requires FAD as cofactor.

The degradation of the thiocarbamate herbicide EPTC by cytochrome CYP116 (thcB) requires the participation of a flavoprotein, rhodocoxin reductase, and an iron-sulfur protein, rhodocoxin, to mediate the transfer of electrons from NADH to P450 for oxygen activation. The protein is Rhodocoxin reductase (thcD) of Rhodococcus erythropolis (Arthrobacter picolinophilus).